The primary structure comprises 427 residues: Light-independent protochlorophyllide reductase subunit N (427 aa).

[4Fe-4S] cluster is bound by residues cysteine 30, cysteine 55, and cysteine 116.

Belongs to the BchN/ChlN family. In terms of assembly, protochlorophyllide reductase is composed of three subunits; BchL, BchN and BchB. Forms a heterotetramer of two BchB and two BchN subunits. The cofactor is [4Fe-4S] cluster.

The enzyme catalyses chlorophyllide a + oxidized 2[4Fe-4S]-[ferredoxin] + 2 ADP + 2 phosphate = protochlorophyllide a + reduced 2[4Fe-4S]-[ferredoxin] + 2 ATP + 2 H2O. The protein operates within porphyrin-containing compound metabolism; bacteriochlorophyll biosynthesis (light-independent). In terms of biological role, component of the dark-operative protochlorophyllide reductase (DPOR) that uses Mg-ATP and reduced ferredoxin to reduce ring D of protochlorophyllide (Pchlide) to form chlorophyllide a (Chlide). This reaction is light-independent. The NB-protein (BchN-BchB) is the catalytic component of the complex. The protein is Light-independent protochlorophyllide reductase subunit N of Rhodopseudomonas palustris (strain BisA53).